A 518-amino-acid chain; its full sequence is Beta-secretase 2 (518 aa).

Positions methionine 1 to alanine 20 are cleaved as a signal peptide. Positions alanine 21–leucine 62 are excised as a propeptide. Residues alanine 21 to tyrosine 473 lie on the Extracellular side of the membrane. The Peptidase A1 domain maps to tyrosine 92–alanine 429. Aspartate 110 is a catalytic residue. A glycan (N-linked (GlcNAc...) asparagine) is linked at asparagine 170. Intrachain disulfides connect cysteine 233–cysteine 433, cysteine 292–cysteine 457, and cysteine 344–cysteine 393. Residue aspartate 303 is part of the active site. An N-linked (GlcNAc...) asparagine glycan is attached at asparagine 366. A helical membrane pass occupies residues alanine 474–phenylalanine 494. Residues arginine 495–lysine 518 are Cytoplasmic-facing.

It belongs to the peptidase A1 family. As to quaternary structure, monomer. Interacts with RTN3 and RTN4. Post-translationally, undergoes autoproteolytic cleavage. Glycosylated. In terms of tissue distribution, brain. Present in neurons within the hippocampus, frontal cortex and temporal cortex (at protein level). Expressed at low levels in most peripheral tissues and at higher levels in colon, kidney, pancreas, placenta, prostate, stomach and trachea. Expressed at low levels in the brain. Found in spinal cord, medulla oblongata, substantia nigra and locus coruleus. Expressed in the ductal epithelium of both normal and malignant prostate.

It is found in the cell membrane. It localises to the golgi apparatus. The protein localises to the endoplasmic reticulum. Its subcellular location is the endosome. The protein resides in the melanosome. It catalyses the reaction Broad endopeptidase specificity. Cleaves Glu-Val-Asn-Leu-|-Asp-Ala-Glu-Phe in the Swedish variant of Alzheimer's amyloid precursor protein.. Responsible for the proteolytic processing of the amyloid precursor protein (APP). Cleaves APP, between residues 690 and 691, leading to the generation and extracellular release of beta-cleaved soluble APP, and a corresponding cell-associated C-terminal fragment which is later released by gamma-secretase. It has also been shown that it can cleave APP between residues 671 and 672. Involved in the proteolytic shedding of PMEL at early stages of melanosome biogenesis. Cleaves PMEL within the M-beta fragment to release the amyloidogenic PMEL luminal fragment containing M-alpha and a small portion of M-beta N-terminus. This is a prerequisite step for subsequent processing and assembly of PMEL fibrils into amyloid sheets. Responsible also for the proteolytic processing of CLTRN in pancreatic beta cells. In Homo sapiens (Human), this protein is Beta-secretase 2 (BACE2).